We begin with the raw amino-acid sequence, 252 residues long: NAD-dependent protein deacetylase (252 aa).

One can recognise a Deacetylase sirtuin-type domain in the interval 2–243 (DSKRDEKILE…DRVVKELKKI (242 aa)). NAD(+) contacts are provided by Ala28, Thr32, Phe39, Arg40, Gln109, Ile111, Asp112, and His127. Position 39 (Phe39) interacts with nicotinamide. Residues Ile111 and Asp112 each coordinate nicotinamide. His127 serves as the catalytic Proton acceptor. Cys135, Cys138, Cys148, and Cys150 together coordinate Zn(2+). NAD(+) contacts are provided by Thr188, Ser189, and Asn211.

It belongs to the sirtuin family. Class U subfamily. Zn(2+) is required as a cofactor.

It is found in the cytoplasm. It catalyses the reaction N(6)-acetyl-L-lysyl-[protein] + NAD(+) + H2O = 2''-O-acetyl-ADP-D-ribose + nicotinamide + L-lysyl-[protein]. In terms of biological role, NAD-dependent protein deacetylase which modulates the activities of several enzymes which are inactive in their acetylated form. This Fusobacterium nucleatum subsp. nucleatum (strain ATCC 25586 / DSM 15643 / BCRC 10681 / CIP 101130 / JCM 8532 / KCTC 2640 / LMG 13131 / VPI 4355) protein is NAD-dependent protein deacetylase.